The primary structure comprises 304 residues: Acetyl-coenzyme A carboxylase carboxyl transferase subunit beta (304 aa).

In terms of domain architecture, CoA carboxyltransferase N-terminal spans 52 to 304 (EVTKCPSCGV…TIFKVLNDII (253 aa)). Cys-56, Cys-59, Cys-75, and Cys-78 together coordinate Zn(2+). The segment at 56–78 (CPSCGVLSHKSEIRANMKMCSNC) adopts a C4-type zinc-finger fold.

The protein belongs to the AccD/PCCB family. Acetyl-CoA carboxylase is a heterohexamer composed of biotin carboxyl carrier protein (AccB), biotin carboxylase (AccC) and two subunits each of ACCase subunit alpha (AccA) and ACCase subunit beta (AccD). Zn(2+) serves as cofactor.

The protein resides in the cytoplasm. The catalysed reaction is N(6)-carboxybiotinyl-L-lysyl-[protein] + acetyl-CoA = N(6)-biotinyl-L-lysyl-[protein] + malonyl-CoA. It functions in the pathway lipid metabolism; malonyl-CoA biosynthesis; malonyl-CoA from acetyl-CoA: step 1/1. In terms of biological role, component of the acetyl coenzyme A carboxylase (ACC) complex. Biotin carboxylase (BC) catalyzes the carboxylation of biotin on its carrier protein (BCCP) and then the CO(2) group is transferred by the transcarboxylase to acetyl-CoA to form malonyl-CoA. This Fusobacterium nucleatum subsp. nucleatum (strain ATCC 25586 / DSM 15643 / BCRC 10681 / CIP 101130 / JCM 8532 / KCTC 2640 / LMG 13131 / VPI 4355) protein is Acetyl-coenzyme A carboxylase carboxyl transferase subunit beta.